The following is a 201-amino-acid chain: Diadenylate cyclase CdaS (201 aa).

Positions 54–201 constitute a DAC domain; the sequence is QTLAATYYIQ…LNGILYTISL (148 aa).

This sequence belongs to the adenylate cyclase family. DacB/CdaS subfamily. In terms of assembly, probably forms a homohexamer. It depends on Mg(2+) as a cofactor.

It catalyses the reaction 2 ATP = 3',3'-c-di-AMP + 2 diphosphate. In terms of biological role, one of 3 paralogous diadenylate cyclases (DAC) in this bacteria catalyzing the condensation of 2 ATP molecules into cyclic di-AMP (c-di-AMP). It has slow DAC activity with ADP as a substrate and may have weak ADPase activity. Required for efficient spore formation, whereas in B.subtilis, it is required for efficient spore germination. It is produced under the control of different sigma factors in the two bacteria. It is also required for parasporal crystal formation. The sequence is that of Diadenylate cyclase CdaS from Bacillus thuringiensis (strain BMB171).